The primary structure comprises 455 residues: SVGFKAGVKDYKLTYYTPDYETKDTDILAAFRVTPQPGVPPEEAGAAVAAESSTGTWTTVWTDGLTSLDRYKGRCYHIEPVAGEESQFIAYVAYPLDLFEEGSVTNMFTSIVGNVFGFKALRALRLEDLRIPNAYVKTFQGPPHGIQVERDKLNKYGRPLLGCTIKPKLGLSAKNYGRAVYECLRGGLDFTKDDENVNSQPFMRWRDRFLFCAEALYKAQAETGEIKGHYLNATAGTCEEMIKRAVFARELGVPIVMHDYLTGGFTANTTLAHYCRDNGLLLHIHRAMHAVIDRQKNHGMHFRVLAKALRLSGGDHIHSGTVVGKLEGEREITLGFVDLLRDDFVEKDRSRGIYFTQDWVSLPGVLPVASGGIHVWHMPALTEIFGDDSVLQFGGGTLGHPWGNAPGAVANRVALEACVQARNEGRDLASEGNQIIREASKWSPELAAACEVWKE.

Lysine 5 carries the post-translational modification N6,N6,N6-trimethyllysine. Substrate-binding residues include asparagine 114 and threonine 164. The active-site Proton acceptor is the lysine 166. Lysine 168 is a binding site for substrate. Lysine 192, aspartate 194, and glutamate 195 together coordinate Mg(2+). At lysine 192 the chain carries N6-carboxylysine. The Proton acceptor role is filled by histidine 285. Substrate-binding residues include arginine 286, histidine 318, and serine 370.

This sequence belongs to the RuBisCO large chain family. Type I subfamily. In terms of assembly, heterohexadecamer of 8 large chains and 8 small chains; disulfide-linked. The disulfide link is formed within the large subunit homodimers. It depends on Mg(2+) as a cofactor. In terms of processing, the disulfide bond which can form in the large chain dimeric partners within the hexadecamer appears to be associated with oxidative stress and protein turnover.

The protein localises to the plastid. It localises to the chloroplast. The catalysed reaction is 2 (2R)-3-phosphoglycerate + 2 H(+) = D-ribulose 1,5-bisphosphate + CO2 + H2O. It carries out the reaction D-ribulose 1,5-bisphosphate + O2 = 2-phosphoglycolate + (2R)-3-phosphoglycerate + 2 H(+). In terms of biological role, ruBisCO catalyzes two reactions: the carboxylation of D-ribulose 1,5-bisphosphate, the primary event in carbon dioxide fixation, as well as the oxidative fragmentation of the pentose substrate in the photorespiration process. Both reactions occur simultaneously and in competition at the same active site. This chain is Ribulose bisphosphate carboxylase large chain, found in Lupinus cosentinii (West Australian blue lupine).